We begin with the raw amino-acid sequence, 42 residues long: uncharacterized protein (42 aa).

A helical membrane pass occupies residues 5 to 27; that stretch reads FLHTNITIIPHSVLYVSLSYYII.

The protein resides in the membrane. This is an uncharacterized protein from Saccharomyces cerevisiae (strain ATCC 204508 / S288c) (Baker's yeast).